Reading from the N-terminus, the 210-residue chain is Superoxide dismutase [Mn], mitochondrial (210 aa).

Mn(2+) is bound by residues H29, H77, D164, and H168.

It belongs to the iron/manganese superoxide dismutase family. As to quaternary structure, homotetramer. Requires Mn(2+) as cofactor.

Its subcellular location is the mitochondrion matrix. The catalysed reaction is 2 superoxide + 2 H(+) = H2O2 + O2. In terms of biological role, destroys superoxide anion radicals which are normally produced within the cells and which are toxic to biological systems. In Aspergillus oryzae (strain ATCC 42149 / RIB 40) (Yellow koji mold), this protein is Superoxide dismutase [Mn], mitochondrial (sodB).